The primary structure comprises 398 residues: Acetate kinase (398 aa).

N9 lines the Mg(2+) pocket. K16 lines the ATP pocket. R90 provides a ligand contact to substrate. D147 acts as the Proton donor/acceptor in catalysis. ATP contacts are provided by residues H207 to G211, D282 to R284, and G330 to N334. Position 384 (E384) interacts with Mg(2+).

This sequence belongs to the acetokinase family. As to quaternary structure, homodimer. The cofactor is Mg(2+). Mn(2+) is required as a cofactor.

It localises to the cytoplasm. The enzyme catalyses acetate + ATP = acetyl phosphate + ADP. Its pathway is metabolic intermediate biosynthesis; acetyl-CoA biosynthesis; acetyl-CoA from acetate: step 1/2. Catalyzes the formation of acetyl phosphate from acetate and ATP. Can also catalyze the reverse reaction. The chain is Acetate kinase from Staphylococcus haemolyticus (strain JCSC1435).